We begin with the raw amino-acid sequence, 152 residues long: Small ribosomal subunit protein uS13 (152 aa).

A disordered region spans residues 133–152 (GQHTKTTGRRGRTVGVSKKK).

It belongs to the universal ribosomal protein uS13 family.

Its subcellular location is the cytoplasm. Located at the top of the head of the 40S subunit, it contacts several helices of the 18S rRNA. The protein is Small ribosomal subunit protein uS13 (RpS18) of Spodoptera frugiperda (Fall armyworm).